A 296-amino-acid polypeptide reads, in one-letter code: tRNA (guanine-N(7)-)-methyltransferase (296 aa).

The disordered stretch occupies residues Met-1 to Pro-26. Residues Gly-101, Glu-124 to Ile-125, Asn-168 to Ser-169, and Leu-188 contribute to the S-adenosyl-L-methionine site. Asp-191 is an active-site residue. Residue Thr-266 to Glu-268 coordinates S-adenosyl-L-methionine.

The protein belongs to the class I-like SAM-binding methyltransferase superfamily. TrmB family. Forms a complex with TRM82.

It is found in the nucleus. The enzyme catalyses guanosine(46) in tRNA + S-adenosyl-L-methionine = N(7)-methylguanosine(46) in tRNA + S-adenosyl-L-homocysteine. It functions in the pathway tRNA modification; N(7)-methylguanine-tRNA biosynthesis. Functionally, catalyzes the formation of N(7)-methylguanine at position 46 (m7G46) in tRNA. The polypeptide is tRNA (guanine-N(7)-)-methyltransferase (Cryptococcus neoformans var. neoformans serotype D (strain JEC21 / ATCC MYA-565) (Filobasidiella neoformans)).